Here is an 804-residue protein sequence, read N- to C-terminus: Leucine--tRNA ligase (804 aa).

Residues 40-51 (PYPSGAGLHVGH) carry the 'HIGH' region motif. The short motif at 576-580 (KMSKS) is the 'KMSKS' region element. Lys-579 serves as a coordination point for ATP.

Belongs to the class-I aminoacyl-tRNA synthetase family.

The protein localises to the cytoplasm. It carries out the reaction tRNA(Leu) + L-leucine + ATP = L-leucyl-tRNA(Leu) + AMP + diphosphate. The polypeptide is Leucine--tRNA ligase (Bacillus subtilis (strain 168)).